A 154-amino-acid polypeptide reads, in one-letter code: MLSPRRVKFRKQQRGRMRGIATRGNTIAFGTFALQAQECGWITSRQIEASRRAMTRYTKRGGKIWIRIFPDKPVTMRAAETRMGSGKGNPEFWVAVIKPGRILFEIGGPEITEELAKEAMRLAQYKLPVKTKFLVKEEQEAAVEATAQTAAVES.

It belongs to the universal ribosomal protein uL16 family. Part of the 50S ribosomal subunit.

Its function is as follows. Binds 23S rRNA and is also seen to make contacts with the A and possibly P site tRNAs. This chain is Large ribosomal subunit protein uL16, found in Synechococcus sp. (strain RCC307).